Here is a 585-residue protein sequence, read N- to C-terminus: MSHQPLSCLTEKGDSSCETPGNGPSNMVHPNLDTFTPEELLQQMKELLVENHQLKEAMKLNNQAMKGRFEELSAWTEKQKEERQLFEIQSKEAKERLKALSHENERLKEELGKLKEKSERPFEDITGRCGFPRTDLEQEVEQLKRQVEQEVEHLKIQVRRLQAEKADLLGIVSELQLKLNSGGSSEDSFVEIRMTEGEAEGAMKEMRNSAGPTRTDSISMGKCTEDARTCVEFEELTVSQLLLCLREGNQKVERLEIALREAKERISDFEKKANGHSAIETQTEGSTQKEEEDKDPESVGIEVETLNVQVASLFKELQEAHTKLSEAELMKKRLQEKCQALERKNSATPSELNEKQELVYSNRKLELQVESMRSEIKMEQAKTEEEKSRLATLQATHDKLLQEHNKALRTIEELTKQQAEKVDKVQLQELSEKLELAEQALASKQLQMDEMKQTIAKQEEDLETMAVLRAQMEVYCSDFHAERAAREKIHEEKEQLALQLAILLKENNDFEDGGSRQSLMEMQCRHGARTSDSDQQAYLFQRGAEDMSWQHGQQPRSIPIHSCPKCGEVLPDIDTLQIHVMDCII.

A disordered region spans residues 1–32; it reads MSHQPLSCLTEKGDSSCETPGNGPSNMVHPNL. A compositionally biased stretch (polar residues) spans 16–25; sequence SCETPGNGPS. Residues 38–181 are a coiled coil; the sequence is EELLQQMKEL…VSELQLKLNS (144 aa). The interaction with Rab8 stretch occupies residues 58-220; the sequence is MKLNNQAMKG…GPTRTDSISM (163 aa). An LIR motif is present at residues 187–192; that stretch reads DSFVEI. 2 positions are modified to phosphoserine: S188 and S209. Disordered regions lie at residues 200–220 and 269–299; these read EGAM…SISM and FEKK…PESV. The stretch at 244–512 forms a coiled coil; sequence CLREGNQKVE…LLKENNDFED (269 aa). S346 is modified (phosphoserine). The tract at residues 415–585 is interaction with HD; the sequence is TKQQAEKVDK…LQIHVMDCII (171 aa). The interval 416–525 is interaction with MYO6; it reads KQQAEKVDKV…RQSLMEMQCR (110 aa). A UBAN motif is present at residues 478–483; the sequence is DFHAER. S531 is modified (phosphoserine). The CCHC NOA-type zinc-finger motif lies at 555–585; it reads PRSIPIHSCPKCGEVLPDIDTLQIHVMDCII. C563, C566, H579, and C583 together coordinate Zn(2+).

In terms of assembly, self-associates. Interacts with HD. Interacts with GTF3A. Interacts with MYO6. Interacts (via UBAN) with ubiquitinated TFRC. Interacts with GTP-bound Rab8 (RAB8A and/or RAB8B). Interacts with TBC1D17. Interacts with TBK1. Interacts with TRAF3. Binds to linear ubiquitin chains. Interacts with LC3 family members MAP1LC3A, MAP1LC3B, GABARAP, GABARAPL1 and GABARAPL2; OPTN phosphorylation increases the association (at least with MAP1LC3B). Interacts with RAB12; the interaction may be indirect. Interacts with TBK1; this interaction leads to the Golgi localization of TBK1 and its subsequent activation. Interacts with palmitoyltransferase ZDHHC17/HIP14; the interaction does not lead to palmitoylation of OPTN. Interacts with CYLD. Interacts with TOM1; the interaction is indirect and is mediated by MYO6, which acts as a bridge between TOM1 and OPTN. Interacts with USP12; the interaction is independent of USP12 deubiquitinase activity and may be involved in regulation of autophagic flux. Post-translationally, phosphorylated by TBK1, leading to restrict bacterial proliferation in case of infection.

It localises to the cytoplasm. It is found in the perinuclear region. The protein localises to the golgi apparatus. Its subcellular location is the trans-Golgi network. The protein resides in the cytoplasmic vesicle. It localises to the autophagosome. It is found in the recycling endosome. Its function is as follows. Plays an important role in the maintenance of the Golgi complex, in membrane trafficking, in exocytosis, through its interaction with myosin VI and Rab8. Links myosin VI to the Golgi complex and plays an important role in Golgi ribbon formation. Negatively regulates the induction of IFNB in response to RNA virus infection. Plays a neuroprotective role in the eye and optic nerve. Probably part of the TNF-alpha signaling pathway that can shift the equilibrium toward induction of cell death. May act by regulating membrane trafficking and cellular morphogenesis via a complex that contains Rab8 and huntingtin (HD). Mediates the interaction of Rab8 with the probable GTPase-activating protein TBC1D17 during Rab8-mediated endocytic trafficking, such as that of transferrin receptor (TFRC/TfR); regulates Rab8 recruitment to tubules emanating from the endocytic recycling compartment. Autophagy receptor that interacts directly with both the cargo to become degraded and an autophagy modifier of the MAP1 LC3 family; targets ubiquitin-coated bacteria (xenophagy) and appears to function in the same pathway as SQSTM1 and CALCOCO2/NDP52. This Rattus norvegicus (Rat) protein is Optineurin (Optn).